Here is a 254-residue protein sequence, read N- to C-terminus: CRISPR-associated endoribonuclease Cas6 1 (254 aa).

Tyrosine 32 (proton acceptor) is an active-site residue. Histidine 47 serves as the catalytic Proton donor.

It belongs to the CRISPR-associated protein Cas6/Cse3/CasE family.

Its function is as follows. CRISPR (clustered regularly interspaced short palindromic repeat) is an adaptive immune system that provides protection against mobile genetic elements (viruses, transposable elements and conjugative plasmids). CRISPR clusters contain sequences complementary to antecedent mobile elements and target invading nucleic acids. CRISPR clusters are transcribed and processed into CRISPR RNA (crRNA). This protein processes pre-crRNA into individual crRNA units. In Methanocaldococcus jannaschii (strain ATCC 43067 / DSM 2661 / JAL-1 / JCM 10045 / NBRC 100440) (Methanococcus jannaschii), this protein is CRISPR-associated endoribonuclease Cas6 1 (cas6a).